The primary structure comprises 1065 residues: N-terminal acetyltransferase B complex auxiliary subunit NAA25 (1065 aa).

Residues 294–327 form a TPR repeat; sequence VDKLRIQGRLLARANDYSAAVDVYKKILELSPDD.

It belongs to the MDM20/NAA25 family. As to expression, ubiquitously expressed, with a higher expression in vascular bundles, hydathodes, leaf primordia and the base of the trichomes.

It localises to the cytoplasm. Functionally, auxiliary subunit of the NatB N-alpha-acetyltransferase complex. Required for flowering time regulation and for vegetative and reproductive plant development. This chain is N-terminal acetyltransferase B complex auxiliary subunit NAA25, found in Arabidopsis thaliana (Mouse-ear cress).